We begin with the raw amino-acid sequence, 152 residues long: Deoxyuridine 5'-triphosphate nucleotidohydrolase (152 aa).

Residues 71–73, Asn84, 88–90, and Met98 contribute to the substrate site; these read RSG and LID.

It belongs to the dUTPase family. Mg(2+) is required as a cofactor.

It carries out the reaction dUTP + H2O = dUMP + diphosphate + H(+). The protein operates within pyrimidine metabolism; dUMP biosynthesis; dUMP from dCTP (dUTP route): step 2/2. Functionally, this enzyme is involved in nucleotide metabolism: it produces dUMP, the immediate precursor of thymidine nucleotides and it decreases the intracellular concentration of dUTP so that uracil cannot be incorporated into DNA. The sequence is that of Deoxyuridine 5'-triphosphate nucleotidohydrolase from Aeromonas salmonicida (strain A449).